Here is a 306-residue protein sequence, read N- to C-terminus: Bifunctional protein FolD (306 aa).

Residues 166-168 (GRS) and isoleucine 232 each bind NADP(+).

Belongs to the tetrahydrofolate dehydrogenase/cyclohydrolase family. Homodimer.

It catalyses the reaction (6R)-5,10-methylene-5,6,7,8-tetrahydrofolate + NADP(+) = (6R)-5,10-methenyltetrahydrofolate + NADPH. The enzyme catalyses (6R)-5,10-methenyltetrahydrofolate + H2O = (6R)-10-formyltetrahydrofolate + H(+). Its pathway is one-carbon metabolism; tetrahydrofolate interconversion. In terms of biological role, catalyzes the oxidation of 5,10-methylenetetrahydrofolate to 5,10-methenyltetrahydrofolate and then the hydrolysis of 5,10-methenyltetrahydrofolate to 10-formyltetrahydrofolate. The polypeptide is Bifunctional protein FolD (Methylorubrum extorquens (strain CM4 / NCIMB 13688) (Methylobacterium extorquens)).